We begin with the raw amino-acid sequence, 704 residues long: Elongation factor G (704 aa).

In terms of domain architecture, tr-type G spans 8 to 290 (ARYRNIGISA…AVIDYLPSPV (283 aa)). GTP-binding positions include 17–24 (AHIDAGKT), 88–92 (DTPGH), and 142–145 (NKMD). Lys504 and Lys643 each carry N6-acetyllysine.

Belongs to the TRAFAC class translation factor GTPase superfamily. Classic translation factor GTPase family. EF-G/EF-2 subfamily.

It localises to the cytoplasm. In terms of biological role, catalyzes the GTP-dependent ribosomal translocation step during translation elongation. During this step, the ribosome changes from the pre-translocational (PRE) to the post-translocational (POST) state as the newly formed A-site-bound peptidyl-tRNA and P-site-bound deacylated tRNA move to the P and E sites, respectively. Catalyzes the coordinated movement of the two tRNA molecules, the mRNA and conformational changes in the ribosome. This is Elongation factor G from Escherichia coli O17:K52:H18 (strain UMN026 / ExPEC).